A 599-amino-acid chain; its full sequence is DNA primase (599 aa).

A CHC2-type zinc finger spans residues 40–64; the sequence is CPFHGENTPSFSVSPDKQLYHCFGC. In terms of domain architecture, Toprim spans 259–342; that stretch reads NEAVLFEGYV…KVAMIPDGLD (84 aa). Positions 265, 309, and 311 each coordinate Mg(2+).

It belongs to the DnaG primase family. Monomer. Interacts with DnaB. Zn(2+) is required as a cofactor. Mg(2+) serves as cofactor.

It catalyses the reaction ssDNA + n NTP = ssDNA/pppN(pN)n-1 hybrid + (n-1) diphosphate.. Functionally, RNA polymerase that catalyzes the synthesis of short RNA molecules used as primers for DNA polymerase during DNA replication. The polypeptide is DNA primase (Halalkalibacterium halodurans (strain ATCC BAA-125 / DSM 18197 / FERM 7344 / JCM 9153 / C-125) (Bacillus halodurans)).